Here is a 464-residue protein sequence, read N- to C-terminus: Probable pectin lyase F (464 aa).

The first 20 residues, 1–20 (MAIIRSVIAATALLGAAVNA), serve as a signal peptide directing secretion. A disulfide bridge links Cys80 with Cys103. Asn126 carries N-linked (GlcNAc...) asparagine glycosylation. The active site involves Arg252. A disulfide bridge links Cys319 with Cys327. The interval 424-464 (EHEVSTPAVPTPTPVPSSVGSHGSTAGSSHPPAFSRTSFES) is disordered. Residues 439–448 (PSSVGSHGST) show a composition bias toward low complexity.

This sequence belongs to the polysaccharide lyase 1 family.

It is found in the secreted. It carries out the reaction Eliminative cleavage of (1-&gt;4)-alpha-D-galacturonan methyl ester to give oligosaccharides with 4-deoxy-6-O-methyl-alpha-D-galact-4-enuronosyl groups at their non-reducing ends.. Functionally, pectinolytic enzymes consist of four classes of enzymes: pectin lyase, polygalacturonase, pectin methylesterase and rhamnogalacturonase. Among pectinolytic enzymes, pectin lyase is the most important in depolymerization of pectin, since it cleaves internal glycosidic bonds of highly methylated pectins. In Emericella nidulans (strain FGSC A4 / ATCC 38163 / CBS 112.46 / NRRL 194 / M139) (Aspergillus nidulans), this protein is Probable pectin lyase F (pelF).